The following is a 510-amino-acid chain: Hepatic triacylglycerol lipase (510 aa).

The signal sequence occupies residues 1–21 (MGNPLQISIFLVFCIFIQSSA). A glycan (N-linked (GlcNAc...) asparagine) is linked at Asn79. Catalysis depends on Ser169, which acts as the Nucleophile. Asp195 serves as the catalytic Charge relay system. The essential for determining substrate specificity stretch occupies residues 255–278 (CHFLELYKHIAEHGLNAITQTIKC). Residue His280 is the Charge relay system of the active site. The region spanning 353 to 487 (YHYQFKIQFI…HPSQEKVFVN (135 aa)) is the PLAT domain. Asn398 is a glycosylation site (N-linked (GlcNAc...) asparagine).

This sequence belongs to the AB hydrolase superfamily. Lipase family. In terms of assembly, homodimer.

The protein localises to the secreted. The enzyme catalyses a triacylglycerol + H2O = a diacylglycerol + a fatty acid + H(+). It carries out the reaction a 1-acyl-sn-glycero-3-phosphocholine + H2O = sn-glycerol 3-phosphocholine + a fatty acid + H(+). The catalysed reaction is a 1,2-diacyl-sn-glycero-3-phosphocholine + H2O = a 2-acyl-sn-glycero-3-phosphocholine + a fatty acid + H(+). It catalyses the reaction 1,2,3-tri-(9Z-octadecenoyl)-glycerol + H2O = di-(9Z)-octadecenoylglycerol + (9Z)-octadecenoate + H(+). The enzyme catalyses 1,2-di-(9Z-octadecenoyl)-sn-glycero-3-phosphocholine + H2O = (9Z-octadecenoyl)-sn-glycero-3-phosphocholine + (9Z)-octadecenoate + H(+). It carries out the reaction 1,2,3-tributanoylglycerol + H2O = dibutanoylglycerol + butanoate + H(+). The catalysed reaction is 1,2-dihexadecanoyl-sn-glycero-3-phosphocholine + H2O = hexadecanoyl-sn-glycero-3-phosphocholine + hexadecanoate + H(+). It catalyses the reaction 1,2-di-(9Z-octadecenoyl)-sn-glycerol + H2O = 2-(9Z-octadecenoyl)-glycerol + (9Z)-octadecenoate + H(+). The enzyme catalyses 1,2,3-tri-(9Z-octadecenoyl)-glycerol + H2O = 2,3-di-(9Z)-octadecenoyl-sn-glycerol + (9Z)-octadecenoate + H(+). It carries out the reaction 1-(9Z-octadecenoyl)-sn-glycero-3-phospho-L-serine + H2O = sn-glycero-3-phospho-L-serine + (9Z)-octadecenoate + H(+). The catalysed reaction is 1-hexadecanoyl-sn-glycero-3-phosphocholine + H2O = sn-glycerol 3-phosphocholine + hexadecanoate + H(+). It catalyses the reaction 1,3-di-(9Z-octadecenoyl)-glycerol + H2O = 3-(9Z-octadecenoyl)-sn-glycerol + (9Z)-octadecenoate + H(+). Its function is as follows. Catalyzes the hydrolysis of triglycerides and phospholipids present in circulating plasma lipoproteins, including chylomicrons, intermediate density lipoproteins (IDL), low density lipoproteins (LDL) of large size and high density lipoproteins (HDL), releasing free fatty acids (FFA) and smaller lipoprotein particles. Also exhibits lysophospholipase activity. Can hydrolyze both neutral lipid and phospholipid substrates but shows a greater binding affinity for neutral lipid substrates than phospholipid substrates. In native LDL, preferentially hydrolyzes the phosphatidylcholine species containing polyunsaturated fatty acids at sn-2 position. This is Hepatic triacylglycerol lipase (Lipc) from Mus musculus (Mouse).